The sequence spans 62 residues: Small ribosomal subunit protein bS21 (62 aa).

Basic and acidic residues predominate over residues 43–52 (VKKKLKSEAA). A disordered region spans residues 43 to 62 (VKKKLKSEAARKRKNRRRFK). A compositionally biased stretch (basic residues) spans 53–62 (RKRKNRRRFK).

It belongs to the bacterial ribosomal protein bS21 family.

The chain is Small ribosomal subunit protein bS21 from Lactiplantibacillus plantarum (strain ATCC BAA-793 / NCIMB 8826 / WCFS1) (Lactobacillus plantarum).